Here is a 71-residue protein sequence, read N- to C-terminus: DNA-directed RNA polymerase subunit omega (71 aa).

It belongs to the RNA polymerase subunit omega family. In terms of assembly, the RNAP catalytic core consists of 2 alpha, 1 beta, 1 beta' and 1 omega subunit. When a sigma factor is associated with the core the holoenzyme is formed, which can initiate transcription.

The catalysed reaction is RNA(n) + a ribonucleoside 5'-triphosphate = RNA(n+1) + diphosphate. Functionally, promotes RNA polymerase assembly. Latches the N- and C-terminal regions of the beta' subunit thereby facilitating its interaction with the beta and alpha subunits. In Syntrophomonas wolfei subsp. wolfei (strain DSM 2245B / Goettingen), this protein is DNA-directed RNA polymerase subunit omega.